The primary structure comprises 100 residues: Aspartyl/glutamyl-tRNA(Asn/Gln) amidotransferase subunit C (100 aa).

It belongs to the GatC family. In terms of assembly, heterotrimer of A, B and C subunits.

It catalyses the reaction L-glutamyl-tRNA(Gln) + L-glutamine + ATP + H2O = L-glutaminyl-tRNA(Gln) + L-glutamate + ADP + phosphate + H(+). It carries out the reaction L-aspartyl-tRNA(Asn) + L-glutamine + ATP + H2O = L-asparaginyl-tRNA(Asn) + L-glutamate + ADP + phosphate + 2 H(+). In terms of biological role, allows the formation of correctly charged Asn-tRNA(Asn) or Gln-tRNA(Gln) through the transamidation of misacylated Asp-tRNA(Asn) or Glu-tRNA(Gln) in organisms which lack either or both of asparaginyl-tRNA or glutaminyl-tRNA synthetases. The reaction takes place in the presence of glutamine and ATP through an activated phospho-Asp-tRNA(Asn) or phospho-Glu-tRNA(Gln). In Rickettsia canadensis (strain McKiel), this protein is Aspartyl/glutamyl-tRNA(Asn/Gln) amidotransferase subunit C.